The primary structure comprises 556 residues: Membrane protein insertase YidC (556 aa).

A helical transmembrane segment spans residues 5–25 (TLTAIVLSFVLLTAFQFYMAW). Positions 36-74 (QVQSGESSAPAPLASTAPVADALPPPVEGMAGSAPQQAM) are disordered. The span at 42–55 (SSAPAPLASTAPVA) shows a compositional bias: low complexity. Helical transmembrane passes span 370 to 390 (NYGVAIILLTLAIKLLFFPLA), 441 to 461 (LPILVQIPVFFALYKVLFLSV), 468 to 488 (FMLWIPDLSAMDPFYVLPLLM), and 510 to 530 (IMMFLPVIFTVMFLSFPSGLV).

The protein belongs to the OXA1/ALB3/YidC family. Type 1 subfamily. In terms of assembly, interacts with the Sec translocase complex via SecD. Specifically interacts with transmembrane segments of nascent integral membrane proteins during membrane integration.

The protein resides in the cell inner membrane. Functionally, required for the insertion and/or proper folding and/or complex formation of integral membrane proteins into the membrane. Involved in integration of membrane proteins that insert both dependently and independently of the Sec translocase complex, as well as at least some lipoproteins. Aids folding of multispanning membrane proteins. The protein is Membrane protein insertase YidC of Magnetococcus marinus (strain ATCC BAA-1437 / JCM 17883 / MC-1).